The sequence spans 914 residues: MRFTATAAALVASSIPATLGQHVRDLSNEKWTLSSDALNHTVPGNLPSHAHLDLLKAGVIDDPYHGLNDFNLRWIPESNWTYTTDKIKDLMPIEFCGKYVASTNNQYRQYSFDVSQILEGCNEDPILKIDFGSAPNIVNAIAEDRNSPVWPDGIQQTYEYPNRWFMRKEQSDFGWDWGPAFAPAGPWKPAYIVQLPKAQNIHVLNTDLDIYRKGQINHLPPDQSQPWVVNASIDFVGSLPPNPSMSIEFKDTKSGEILTSKRIGNVTVSGNSVTGVTVLGGVTPKLWWPLGLGDQNLYNITVTVTGHQNQTLAHVTKRTGFRTIFLNQRNITDAQLAQGIAPGANWHFEVNGHEFYAKGSNIIPPDAFWPRVTEARMARLFDAVVAGNQNMLRVWSSGIYLHDFIYDLADERGILLWSEFEFSDALYPVDDAFLDNIAAEVVYNVRRVNHHPSLALWAGGNEIESLMLPTVERKAPEEYAKYVGEYEKLYISLILPLVYQNTRSITYSPSSTTEGYLDVDLSAPVPMVERYHNTTPGSYYGDTDFYNYDSSVSFNSHVYPVGRFANEFGYHSMPSLQTWQQAVDPEDLHFNSTTVMLRNHHYPAGGTFTDNFHNTSLGMGEMTIAVQRYYPIPNKLDSVANFSAWCHATQLFQADMYKSEIQFYRRGSGMPERQLGSLYWQLEDIWQAPSWAGIEYGGRWKVLHYVSRDIYQPIIVSPFWNYTTGDLDLYVTSDLWESAKGKVNLTWLDLSGTPLPHNAGTPGSVPFNVGALNTTKIYSTNIKNLTLPNPKDAILVLSLSGEGHLPNSDKKTTFTHQNHFTPVFPKDLALVDPGLELSYNTKSKTFTVEAKSGVSLYTWLDYPADVVGYFDENAFVLLPGQKKEIGFTVQEDNTDGKWVQGVTVQSLWNQTLEK.

The signal sequence occupies residues 1 to 20 (MRFTATAAALVASSIPATLG). Residues asparagine 39, asparagine 79, asparagine 230, asparagine 265, asparagine 299, asparagine 309, and asparagine 330 are each glycosylated (N-linked (GlcNAc...) asparagine). Residue glutamate 462 is the Proton donor of the active site. N-linked (GlcNAc...) asparagine glycans are attached at residues asparagine 591, asparagine 614, asparagine 641, asparagine 721, asparagine 744, asparagine 773, asparagine 784, and asparagine 909.

Belongs to the glycosyl hydrolase 2 family. Beta-mannosidase A subfamily. Homodimer.

It is found in the secreted. The enzyme catalyses Hydrolysis of terminal, non-reducing beta-D-mannose residues in beta-D-mannosides.. It participates in glycan metabolism; N-glycan degradation. In terms of biological role, exoglycosidase that cleaves the single beta-linked mannose residue from the non-reducing end of beta-mannosidic oligosaccharides of various complexity and length. Involved in the degradation of polymeric mannan and galactomannan. This is Beta-mannosidase A (mndA) from Aspergillus oryzae (strain ATCC 42149 / RIB 40) (Yellow koji mold).